The primary structure comprises 184 residues: MNIRHGIIAMSSTMLVPLAAEAACNTDYSWIDKSCERISDTWKNGDHDLYIPLWTHHLRFAYDNDKIDSFREFTWGLGYGRSRYNAAGNWEGVYLMAFSDSHSNVQPMLGYGHQWMMGPRSGLHAGVGYTAFLTSRADIYKNIPIPGVLPIASLNYRQYSVNTSYVPGGRGNGNILFFWSRVGF.

The first 22 residues, M1–A22, serve as a signal peptide directing secretion. Residues H57, D100, and S101 contribute to the active site.

Belongs to the lipid A palmitoyltransferase family. Homodimer.

It is found in the cell outer membrane. The catalysed reaction is a lipid A + a 1,2-diacyl-sn-glycero-3-phosphocholine = a hepta-acyl lipid A + a 2-acyl-sn-glycero-3-phosphocholine. It catalyses the reaction a lipid IVA + a 1,2-diacyl-sn-glycero-3-phosphocholine = a lipid IVB + a 2-acyl-sn-glycero-3-phosphocholine. It carries out the reaction a lipid IIA + a 1,2-diacyl-sn-glycero-3-phosphocholine = a lipid IIB + a 2-acyl-sn-glycero-3-phosphocholine. Its function is as follows. Transfers a fatty acid residue from the sn-1 position of a phospholipid to the N-linked hydroxyfatty acid chain on the proximal unit of lipid A or its precursors. The chain is Lipid A acyltransferase PagP from Methylobacillus flagellatus (strain ATCC 51484 / DSM 6875 / VKM B-1610 / KT).